Consider the following 231-residue polypeptide: Adenosine 5'-phosphosulfate reductase (231 aa).

[4Fe-4S] cluster is bound by residues Cys-118, Cys-119, Cys-201, and Cys-204. Cys-227 functions as the Nucleophile; cysteine thiosulfonate intermediate in the catalytic mechanism.

The protein belongs to the PAPS reductase family. CysH subfamily. Requires [4Fe-4S] cluster as cofactor.

It localises to the cytoplasm. The catalysed reaction is [thioredoxin]-disulfide + sulfite + AMP + 2 H(+) = adenosine 5'-phosphosulfate + [thioredoxin]-dithiol. The protein operates within sulfur metabolism; hydrogen sulfide biosynthesis; sulfite from sulfate. Catalyzes the formation of sulfite from adenosine 5'-phosphosulfate (APS) using thioredoxin as an electron donor. The chain is Adenosine 5'-phosphosulfate reductase from Halalkalibacterium halodurans (strain ATCC BAA-125 / DSM 18197 / FERM 7344 / JCM 9153 / C-125) (Bacillus halodurans).